Consider the following 858-residue polypeptide: Transcription factor pytR (858 aa).

Residues 1-35 (MAHFSRVASDPSLAPQPSAPSGLDSSTTSSSSTGL) are disordered. Positions 39-65 (CTFCRARKIRCSSGPICSACRERNINC) form a DNA-binding region, zn(2)-C6 fungal-type. The tract at residues 72–99 (RKGRPRRRGTNTSNAQAKKGDQENPTLG) is disordered.

The protein localises to the nucleus. Its function is as follows. Transcription factor that regulates the expression of the gene cluster that mediates the biosynthesis of Pyranterreones, a family of antioxidative compounds. This is Transcription factor pytR from Aspergillus terreus (strain NIH 2624 / FGSC A1156).